The chain runs to 290 residues: Pyridoxal kinase PdxY (290 aa).

Serine 14 lines the substrate pocket. ATP-binding residues include aspartate 116 and glutamate 153. Residue aspartate 226 coordinates substrate.

The protein belongs to the pyridoxine kinase family. PdxY subfamily. As to quaternary structure, homodimer. Mg(2+) serves as cofactor.

The catalysed reaction is pyridoxal + ATP = pyridoxal 5'-phosphate + ADP + H(+). It functions in the pathway cofactor metabolism; pyridoxal 5'-phosphate salvage; pyridoxal 5'-phosphate from pyridoxal: step 1/1. In terms of biological role, pyridoxal kinase involved in the salvage pathway of pyridoxal 5'-phosphate (PLP). Catalyzes the phosphorylation of pyridoxal to PLP. The polypeptide is Pyridoxal kinase PdxY (Rubrobacter xylanophilus (strain DSM 9941 / JCM 11954 / NBRC 16129 / PRD-1)).